A 112-amino-acid chain; its full sequence is MSIKIRLQRKGRKKKAFYTIVVSNSRSPRNGKFLEKIGFYNPNTNPYTISINVDKAVNWLIKGAQPTCTVKSFFLKEGIYYKKYLLSGVKISKSEIEQKLKAWKEKKIILHK.

This sequence belongs to the bacterial ribosomal protein bS16 family.

The protein is Small ribosomal subunit protein bS16 of Karelsulcia muelleri (strain GWSS) (Sulcia muelleri).